Consider the following 106-residue polypeptide: Thioredoxin (106 aa).

One can recognise a Thioredoxin domain in the interval 2–106 (VQVISNLDEF…LESLVQKSLA (105 aa)). Catalysis depends on nucleophile residues C30 and C33. A disulfide bridge links C30 with C33.

It belongs to the thioredoxin family.

Participates in various redox reactions through the reversible oxidation of its active center dithiol to a disulfide and catalyzes dithiol-disulfide exchange reactions. The sequence is that of Thioredoxin from Coprinus comatus (Shaggy mane).